A 394-amino-acid chain; its full sequence is Phosphopentomutase (394 aa).

Mn(2+) is bound by residues aspartate 13, aspartate 286, histidine 291, aspartate 327, histidine 328, and histidine 339.

It belongs to the phosphopentomutase family. Requires Mn(2+) as cofactor.

It localises to the cytoplasm. The enzyme catalyses 2-deoxy-alpha-D-ribose 1-phosphate = 2-deoxy-D-ribose 5-phosphate. The catalysed reaction is alpha-D-ribose 1-phosphate = D-ribose 5-phosphate. The protein operates within carbohydrate degradation; 2-deoxy-D-ribose 1-phosphate degradation; D-glyceraldehyde 3-phosphate and acetaldehyde from 2-deoxy-alpha-D-ribose 1-phosphate: step 1/2. In terms of biological role, isomerase that catalyzes the conversion of deoxy-ribose 1-phosphate (dRib-1-P) and ribose 1-phosphate (Rib-1-P) to deoxy-ribose 5-phosphate (dRib-5-P) and ribose 5-phosphate (Rib-5-P), respectively. The chain is Phosphopentomutase from Bacillus cereus (strain ATCC 10987 / NRS 248).